A 233-amino-acid chain; its full sequence is 5'-methylthioadenosine/S-adenosylhomocysteine nucleosidase (233 aa).

Catalysis depends on glutamate 12, which acts as the Proton acceptor. Residues glycine 78, isoleucine 152, and 173–174 contribute to the substrate site; that span reads ME. Residue aspartate 197 is the Proton donor of the active site.

It belongs to the PNP/UDP phosphorylase family. MtnN subfamily. As to quaternary structure, homodimer.

It carries out the reaction S-adenosyl-L-homocysteine + H2O = S-(5-deoxy-D-ribos-5-yl)-L-homocysteine + adenine. It catalyses the reaction S-methyl-5'-thioadenosine + H2O = 5-(methylsulfanyl)-D-ribose + adenine. The enzyme catalyses 5'-deoxyadenosine + H2O = 5-deoxy-D-ribose + adenine. The protein operates within amino-acid biosynthesis; L-methionine biosynthesis via salvage pathway; S-methyl-5-thio-alpha-D-ribose 1-phosphate from S-methyl-5'-thioadenosine (hydrolase route): step 1/2. Its function is as follows. Catalyzes the irreversible cleavage of the glycosidic bond in both 5'-methylthioadenosine (MTA) and S-adenosylhomocysteine (SAH/AdoHcy) to adenine and the corresponding thioribose, 5'-methylthioribose and S-ribosylhomocysteine, respectively. Also cleaves 5'-deoxyadenosine, a toxic by-product of radical S-adenosylmethionine (SAM) enzymes, into 5-deoxyribose and adenine. Thus, is required for in vivo function of the radical SAM enzymes biotin synthase and lipoic acid synthase, that are inhibited by 5'-deoxyadenosine accumulation. The polypeptide is 5'-methylthioadenosine/S-adenosylhomocysteine nucleosidase (Yersinia enterocolitica serotype O:8 / biotype 1B (strain NCTC 13174 / 8081)).